The chain runs to 252 residues: Acyltransferase PGAP2 (252 aa).

At 1 to 22 the chain is on the cytoplasmic side; it reads MVPVGPERGANSLFSLRFTTFA. A helical membrane pass occupies residues 23 to 43; that stretch reads VGTVSLPLFAFLFCIVWSLLF. Over 44 to 77 the chain is Lumenal; it reads NFSETTATHCHVPNYLPSVSAAIGGETPQRYIWR. A helical transmembrane segment spans residues 78 to 98; that stretch reads LCIGLHSAPRFLVGVAYLHYY. Over 99–111 the chain is Cytoplasmic; it reads QGTPCSSPAYPRL. A helical transmembrane segment spans residues 112–132; that stretch reads CHLNFLLNCCEIFFLILLTYV. The Lumenal portion of the chain corresponds to 133–142; the sequence is SSSENYEVHK. Residues 143 to 163 traverse the membrane as a helical segment; that stretch reads LGFMAFMLFSVGYMFVTCSLW. Residues 164–184 are Cytoplasmic-facing; that stretch reads RVARKGSGSLEERTSYAWKKR. The helical transmembrane segment at 185–205 threads the bilayer; the sequence is LFGFYLLMFLSSILVYIWHNM. Topologically, residues 206–208 are lumenal; sequence YCE. Residues 209–229 form a helical membrane-spanning segment; that stretch reads AGVYTVFALLEYLVVLSNMGF. Topologically, residues 230-252 are cytoplasmic; it reads HMTAWWDFGNKELMICSPGDKRI.

This sequence belongs to the PGAP2 family.

The protein localises to the golgi apparatus membrane. Its function is as follows. Involved in the fatty acid remodeling steps of GPI-anchor maturation where the unsaturated acyl chain at sn-2 of inositol phosphate is replaced by a saturated stearoyl chain. May catalyze the second step of the fatty acid remodeling, by reacylating a lyso-GPI intermediate at sn-2 of inositol phosphate by a saturated chain. The fatty acid remodeling steps is critical for the integration of GPI-APs into lipid rafts. The chain is Acyltransferase PGAP2 from Xenopus tropicalis (Western clawed frog).